A 1059-amino-acid polypeptide reads, in one-letter code: Ubiquitin carboxyl-terminal hydrolase 36 (1059 aa).

2 disordered regions span residues 24-49 (VGNG…DSEM) and 94-148 (SNNN…KPKR). Residues 94-123 (SNNNNSSSCNGSNFGNSKVVGANGHDNGNN) are compositionally biased toward low complexity. A compositionally biased stretch (polar residues) spans 130–139 (QSESTQSGPS). The region spanning 171 to 479 (TGMINVGNTC…NAYIMFYELD (309 aa)) is the USP domain. Cys180 functions as the Nucleophile in the catalytic mechanism. His438 serves as the catalytic Proton acceptor. Positions 505–673 (TVSSSSPTHT…KTPLKSSVKT (169 aa)) are disordered. A phosphoserine mark is found at Ser508 and Ser510. Residues 528–539 (GYSNGHATGSSN) show a composition bias toward polar residues. 3 stretches are compositionally biased toward low complexity: residues 540 to 560 (AQKT…NGLQ), 592 to 611 (NGNK…KSVN), and 633 to 647 (ATAT…RPTA). Over residues 655–664 (MTEDSSDKPK) the composition is skewed to basic and acidic residues. Phosphothreonine is present on residues Thr673 and Thr682. Disordered regions lie at residues 687–893 (LVPY…EAST), 926–998 (KELV…RYHN), and 1012–1059 (KYNR…QSSS). Ser692 and Ser694 each carry phosphoserine. Low complexity-rich tracts occupy residues 729–739 (TKTNGGSLTNG) and 752–765 (SSSS…ASAA). Phosphoserine is present on Ser766. Over residues 766–776 (SDDEDADEEEE) the composition is skewed to acidic residues. Positions 779-795 (KLTNGWQPQKQSQSLTQ) are enriched in polar residues. Residues 799–808 (PPSPKTPPSP) are compositionally biased toward pro residues. Position 801 is a phosphoserine (Ser801). Thr804 bears the Phosphothreonine mark. Ser807 bears the Phosphoserine mark. Acidic residues predominate over residues 825–839 (DNEDEDDDDDEDEEE). Polar residues-rich tracts occupy residues 842–862 (QVVS…STTP) and 876–893 (KSQQ…EAST). Phosphothreonine is present on residues Thr846 and Thr861. Positions 926 to 940 (KELVAEAREQRQHDH) are enriched in basic and acidic residues. The span at 1048 to 1059 (QQQQQQSQQSSS) shows a compositional bias: low complexity.

This sequence belongs to the peptidase C19 family. As to quaternary structure, interacts with atms/PAF1, but not with CycT.

The protein resides in the nucleus. Its subcellular location is the nucleolus. It catalyses the reaction Thiol-dependent hydrolysis of ester, thioester, amide, peptide and isopeptide bonds formed by the C-terminal Gly of ubiquitin (a 76-residue protein attached to proteins as an intracellular targeting signal).. Its function is as follows. Required for maintaining multiple types of adult stem cells, including male and female germline, epithelial follicle cell and intestinal stem cells. May function as a transcriptional repressor by continually deubiquiting histone H2B at the promoters of genes critical for cellular differentiation, thereby preventing histone H3 'Lys-4' trimethylation (H3K4). Controls selective autophagy activation by ubiquitinated proteins. The protein is Ubiquitin carboxyl-terminal hydrolase 36 (Usp36) of Drosophila pseudoobscura pseudoobscura (Fruit fly).